Reading from the N-terminus, the 4083-residue chain is Dynein axonemal heavy chain 3 (4083 aa).

Disordered regions lie at residues 1-37 (MSDT…VSAN) and 111-132 (DKTS…PSKK). Positions 1-1357 (MSDTNCSAQK…HVQMITTEAL (1357 aa)) are stem. Coiled coils occupy residues 1026–1052 (IKPI…AWLK) and 1108–1133 (RMTE…YLEK). AAA regions lie at residues 1358 to 1579 (YGYE…VLTA), 1639 to 1870 (EALN…LHCK), 2003 to 2251 (TIPA…VIQG), and 2362 to 2613 (EFNS…LLRH). Residues 1396–1403 (GPAGTGKT), 1677–1684 (GDPMGGKT), 2041–2048 (GPTGTGKS), and 2401–2408 (GIGGSGRQ) each bind ATP. The interval 2628–2927 (FKTLLNSKRQ…NSLEKNIEIC (300 aa)) is stalk. Residues 2651–2714 (QKLEFASSQV…DEKEANAAAA (64 aa)) are a coiled coil. 2 AAA regions span residues 3012 to 3242 (LGDP…EISE) and 3455 to 3679 (IQNF…QIQM).

This sequence belongs to the dynein heavy chain family. In terms of assembly, consists of at least two heavy chains and a number of intermediate and light chains.

It is found in the cytoplasm. The protein resides in the cytoskeleton. It localises to the cilium axoneme. In terms of biological role, force generating protein of respiratory cilia. Produces force towards the minus ends of microtubules. Dynein has ATPase activity; the force-producing power stroke is thought to occur on release of ADP. Involved in sperm motility; implicated in sperm flagellar assembly. In Mus musculus (Mouse), this protein is Dynein axonemal heavy chain 3 (Dnah3).